Here is a 355-residue protein sequence, read N- to C-terminus: Dihydroorotate dehydrogenase (quinone) (355 aa).

Residues 68–72 and threonine 92 contribute to the FMN site; that span reads AGFDK. A substrate-binding site is contributed by lysine 72. 117 to 121 is a binding site for substrate; it reads NRMGF. 2 residues coordinate FMN: asparagine 154 and asparagine 190. A substrate-binding site is contributed by asparagine 190. Serine 193 (nucleophile) is an active-site residue. Asparagine 195 is a binding site for substrate. Lysine 232 and threonine 260 together coordinate FMN. 261 to 262 contributes to the substrate binding site; that stretch reads NT. FMN is bound by residues glycine 286, glycine 315, and 336–337; that span reads YS.

The protein belongs to the dihydroorotate dehydrogenase family. Type 2 subfamily. As to quaternary structure, monomer. Requires FMN as cofactor.

Its subcellular location is the cell membrane. It carries out the reaction (S)-dihydroorotate + a quinone = orotate + a quinol. It participates in pyrimidine metabolism; UMP biosynthesis via de novo pathway; orotate from (S)-dihydroorotate (quinone route): step 1/1. Catalyzes the conversion of dihydroorotate to orotate with quinone as electron acceptor. This chain is Dihydroorotate dehydrogenase (quinone), found in Nocardioides sp. (strain ATCC BAA-499 / JS614).